A 387-amino-acid polypeptide reads, in one-letter code: 23S rRNA (uracil(747)-C(5))-methyltransferase RlmC (387 aa).

[4Fe-4S] cluster-binding residues include C3, C11, C14, and C86. Residues Q211, F240, E269, and N319 each contribute to the S-adenosyl-L-methionine site. C346 acts as the Nucleophile in catalysis.

The protein belongs to the class I-like SAM-binding methyltransferase superfamily. RNA M5U methyltransferase family. RlmC subfamily.

The enzyme catalyses uridine(747) in 23S rRNA + S-adenosyl-L-methionine = 5-methyluridine(747) in 23S rRNA + S-adenosyl-L-homocysteine + H(+). Functionally, catalyzes the formation of 5-methyl-uridine at position 747 (m5U747) in 23S rRNA. The protein is 23S rRNA (uracil(747)-C(5))-methyltransferase RlmC of Pasteurella multocida (strain Pm70).